The sequence spans 222 residues: Voltage-dependent calcium channel gamma-1 subunit (222 aa).

Residues 1–10 lie on the Cytoplasmic side of the membrane; the sequence is MSPTEAPKVR. The helical transmembrane segment at 11-29 threads the bilayer; the sequence is VTLFCILVGIVLAMTAVVS. Topologically, residues 30-108 are extracellular; that stretch reads DHWAVLSPHM…TQKEYSISAA (79 aa). 2 N-linked (GlcNAc...) asparagine glycosylation sites follow: asparagine 43 and asparagine 79. The cysteines at positions 57 and 80 are disulfide-linked. The helical transmembrane segment at 109-129 threads the bilayer; that stretch reads AISVFSLGFLIMGTICALMAF. Over 130 to 134 the chain is Cytoplasmic; that stretch reads RKKRD. Residues 135–155 form a helical membrane-spanning segment; it reads YLLRPASMFYVFAGLCLFVSL. Residues 156–179 lie on the Extracellular side of the membrane; sequence EVMRQSVKRMIDSEDTVWIEYYYS. Residues 180–204 traverse the membrane as a helical segment; the sequence is WSFACACAAFVLLFLGGISLLLFSL. The Cytoplasmic segment spans residues 205-222; the sequence is PRMPQNPWESCMDAEPEH.

Belongs to the PMP-22/EMP/MP20 family. CACNG subfamily. As to quaternary structure, component of a calcium channel complex consisting of a pore-forming alpha subunit (CACNA1S) and the ancillary subunits CACNB1 or CACNB2, CACNG1 and CACNA2D1. The channel complex contains alpha, beta, gamma and delta subunits in a 1:1:1:1 ratio, i.e. it contains either CACNB1 or CACNB2. In terms of processing, N-glycosylated. As to expression, skeletal muscle (at protein level).

Its subcellular location is the cell membrane. The protein localises to the sarcolemma. Regulatory subunit of the voltage-gated calcium channel that gives rise to L-type calcium currents in skeletal muscle. Regulates channel inactivation kinetics. The polypeptide is Voltage-dependent calcium channel gamma-1 subunit (CACNG1) (Oryctolagus cuniculus (Rabbit)).